Reading from the N-terminus, the 269-residue chain is Eukaryotic translation initiation factor 3 subunit G-1 (269 aa).

Residues 188-266 enclose the RRM domain; that stretch reads AAIRISNLSE…LILSVEWSKP (79 aa).

It belongs to the eIF-3 subunit G family. Component of the eukaryotic translation initiation factor 3 (eIF-3) complex. The eIF-3 complex interacts with pix.

The protein localises to the cytoplasm. RNA-binding component of the eukaryotic translation initiation factor 3 (eIF-3) complex, which is involved in protein synthesis of a specialized repertoire of mRNAs and, together with other initiation factors, stimulates binding of mRNA and methionyl-tRNAi to the 40S ribosome. The eIF-3 complex specifically targets and initiates translation of a subset of mRNAs involved in cell proliferation. This subunit can bind 18S rRNA. This chain is Eukaryotic translation initiation factor 3 subunit G-1, found in Drosophila grimshawi (Hawaiian fruit fly).